A 332-amino-acid chain; its full sequence is Putative D-threonate 4-phosphate dehydrogenase (332 aa).

Substrate is bound by residues histidine 140 and threonine 141. Histidine 170, histidine 214, and histidine 270 together coordinate a divalent metal cation. The substrate site is built by lysine 278, asparagine 287, and arginine 296.

Belongs to the PdxA family. PdxA2 subfamily. As to quaternary structure, homodimer. It depends on a divalent metal cation as a cofactor.

It carries out the reaction 4-O-phospho-D-threonate + NAD(+) = dihydroxyacetone phosphate + CO2 + NADH. In terms of biological role, catalyzes the NAD-dependent oxidation and subsequent decarboxylation of D-threonate 4-phosphate to produce dihydroxyacetone phosphate (DHAP). This Oceanobacillus iheyensis (strain DSM 14371 / CIP 107618 / JCM 11309 / KCTC 3954 / HTE831) protein is Putative D-threonate 4-phosphate dehydrogenase.